A 250-amino-acid polypeptide reads, in one-letter code: 3-deoxy-manno-octulosonate cytidylyltransferase (250 aa).

This sequence belongs to the KdsB family.

Its subcellular location is the cytoplasm. The enzyme catalyses 3-deoxy-alpha-D-manno-oct-2-ulosonate + CTP = CMP-3-deoxy-beta-D-manno-octulosonate + diphosphate. It participates in nucleotide-sugar biosynthesis; CMP-3-deoxy-D-manno-octulosonate biosynthesis; CMP-3-deoxy-D-manno-octulosonate from 3-deoxy-D-manno-octulosonate and CTP: step 1/1. The protein operates within bacterial outer membrane biogenesis; lipopolysaccharide biosynthesis. Functionally, activates KDO (a required 8-carbon sugar) for incorporation into bacterial lipopolysaccharide in Gram-negative bacteria. This is 3-deoxy-manno-octulosonate cytidylyltransferase from Francisella philomiragia subsp. philomiragia (strain ATCC 25017 / CCUG 19701 / FSC 153 / O#319-036).